The chain runs to 484 residues: tRNA sulfurtransferase (484 aa).

The region spanning threonine 61–arginine 165 is the THUMP domain. Residues leucine 183–isoleucine 184, lysine 265, glycine 287, and glutamine 296 contribute to the ATP site. Cysteine 344 and cysteine 456 are oxidised to a cystine. A Rhodanese domain is found at leucine 404–serine 484. Cysteine 456 serves as the catalytic Cysteine persulfide intermediate.

The protein belongs to the ThiI family.

The protein resides in the cytoplasm. The enzyme catalyses [ThiI sulfur-carrier protein]-S-sulfanyl-L-cysteine + a uridine in tRNA + 2 reduced [2Fe-2S]-[ferredoxin] + ATP + H(+) = [ThiI sulfur-carrier protein]-L-cysteine + a 4-thiouridine in tRNA + 2 oxidized [2Fe-2S]-[ferredoxin] + AMP + diphosphate. It catalyses the reaction [ThiS sulfur-carrier protein]-C-terminal Gly-Gly-AMP + S-sulfanyl-L-cysteinyl-[cysteine desulfurase] + AH2 = [ThiS sulfur-carrier protein]-C-terminal-Gly-aminoethanethioate + L-cysteinyl-[cysteine desulfurase] + A + AMP + 2 H(+). It functions in the pathway cofactor biosynthesis; thiamine diphosphate biosynthesis. Functionally, catalyzes the ATP-dependent transfer of a sulfur to tRNA to produce 4-thiouridine in position 8 of tRNAs, which functions as a near-UV photosensor. Also catalyzes the transfer of sulfur to the sulfur carrier protein ThiS, forming ThiS-thiocarboxylate. This is a step in the synthesis of thiazole, in the thiamine biosynthesis pathway. The sulfur is donated as persulfide by IscS. In Histophilus somni (strain 2336) (Haemophilus somnus), this protein is tRNA sulfurtransferase.